The sequence spans 111 residues: uncharacterized protein (111 aa).

A helical membrane pass occupies residues phenylalanine 18–phenylalanine 41.

The protein resides in the membrane. This is an uncharacterized protein from Saccharomyces cerevisiae (strain ATCC 204508 / S288c) (Baker's yeast).